Consider the following 168-residue polypeptide: MPTLLLGAAIPFGTIAYTLFIFLLLLVMLRKFAWGPLMGIMKEREEHVANEIDAAERNNAEAKKLVEEQREMLKQSRVEAQELIERAKKQAVDQKDVIVAAAKEEAESIKASAVQEIQREKEQAIAALQEQVASLSVQIASKVIEKELKEEDQVKLIRDYIKEVGEAR.

Residues 9–29 (AIPFGTIAYTLFIFLLLLVML) traverse the membrane as a helical segment.

The protein belongs to the ATPase B chain family. As to quaternary structure, F-type ATPases have 2 components, F(1) - the catalytic core - and F(0) - the membrane proton channel. F(1) has five subunits: alpha(3), beta(3), gamma(1), delta(1), epsilon(1). F(0) has three main subunits: a(1), b(2) and c(10-14). The alpha and beta chains form an alternating ring which encloses part of the gamma chain. F(1) is attached to F(0) by a central stalk formed by the gamma and epsilon chains, while a peripheral stalk is formed by the delta and b chains.

The protein resides in the cell membrane. Its function is as follows. F(1)F(0) ATP synthase produces ATP from ADP in the presence of a proton or sodium gradient. F-type ATPases consist of two structural domains, F(1) containing the extramembraneous catalytic core and F(0) containing the membrane proton channel, linked together by a central stalk and a peripheral stalk. During catalysis, ATP synthesis in the catalytic domain of F(1) is coupled via a rotary mechanism of the central stalk subunits to proton translocation. Component of the F(0) channel, it forms part of the peripheral stalk, linking F(1) to F(0). This chain is ATP synthase subunit b, found in Bacillus thuringiensis (strain Al Hakam).